The sequence spans 456 residues: GTP cyclohydrolase 1 (456 aa).

Cysteine 340, histidine 343, and cysteine 412 together coordinate Zn(2+).

The protein belongs to the GTP cyclohydrolase I family. Homodimer. In terms of tissue distribution, expressed in leaves and unripe fruits.

It carries out the reaction GTP + H2O = 7,8-dihydroneopterin 3'-triphosphate + formate + H(+). The protein operates within cofactor biosynthesis; 7,8-dihydroneopterin triphosphate biosynthesis; 7,8-dihydroneopterin triphosphate from GTP: step 1/1. Functionally, GTP cyclohydrolase 1 is the first enzyme in the biosynthetic pathway leading to folic acid. The chain is GTP cyclohydrolase 1 (GCH1) from Solanum lycopersicum (Tomato).